A 493-amino-acid polypeptide reads, in one-letter code: Glutamate--tRNA ligase (493 aa).

The 'HIGH' region motif lies at 10 to 20 (PSPTGDPHVGT). The Zn(2+) site is built by C107, C109, C134, and H136. Positions 251 to 255 (KLSKR) match the 'KMSKS' region motif. An ATP-binding site is contributed by K254.

Belongs to the class-I aminoacyl-tRNA synthetase family. Glutamate--tRNA ligase type 1 subfamily. In terms of assembly, monomer. Requires Zn(2+) as cofactor.

The protein resides in the cytoplasm. The enzyme catalyses tRNA(Glu) + L-glutamate + ATP = L-glutamyl-tRNA(Glu) + AMP + diphosphate. Functionally, catalyzes the attachment of glutamate to tRNA(Glu) in a two-step reaction: glutamate is first activated by ATP to form Glu-AMP and then transferred to the acceptor end of tRNA(Glu). This is Glutamate--tRNA ligase from Stutzerimonas stutzeri (strain A1501) (Pseudomonas stutzeri).